A 218-amino-acid chain; its full sequence is ATP-dependent dethiobiotin synthetase BioD (218 aa).

9 to 15 is an ATP binding site; it reads TNAGKTT. Thr-14 is a binding site for Mg(2+). Lys-35 is a catalytic residue. Lys-35 is a phosphate binding site. Residue Thr-39 coordinates substrate. Residues Asp-50, Glu-116, and 116–119 contribute to the ATP site; that span reads EGAG. Positions 50 and 116 each coordinate Mg(2+). Phosphate is bound at residue 116 to 119; the sequence is EGAG. 151–154 lines the substrate pocket; sequence GLIN. ATP-binding positions include Asn-175 and 175 to 177; that span reads NLK.

This sequence belongs to the dethiobiotin synthetase family. In terms of assembly, homodimer. Requires Mg(2+) as cofactor.

Its subcellular location is the cytoplasm. The catalysed reaction is (7R,8S)-7,8-diammoniononanoate + CO2 + ATP = (4R,5S)-dethiobiotin + ADP + phosphate + 3 H(+). The protein operates within cofactor biosynthesis; biotin biosynthesis; biotin from 7,8-diaminononanoate: step 1/2. In terms of biological role, catalyzes a mechanistically unusual reaction, the ATP-dependent insertion of CO2 between the N7 and N8 nitrogen atoms of 7,8-diaminopelargonic acid (DAPA, also called 7,8-diammoniononanoate) to form a ureido ring. The polypeptide is ATP-dependent dethiobiotin synthetase BioD (Helicobacter pylori (strain ATCC 700392 / 26695) (Campylobacter pylori)).